We begin with the raw amino-acid sequence, 676 residues long: Probable LRR receptor-like serine/threonine-protein kinase At4g31250 (676 aa).

The first 26 residues, 1-26 (MTRDDKFPIVYSLLLIVLLFVSPIYG), serve as a signal peptide directing secretion. At 27-242 (DGDADALLKF…LLPCRYTRPP (216 aa)) the chain is on the extracellular side. N-linked (GlcNAc...) asparagine glycosylation is found at asparagine 42, asparagine 73, and asparagine 83. 5 LRR repeats span residues 98–122 (IRGL…IDGL), 123–146 (VSLA…LFSG), 148–171 (KALL…LGKL), 172–195 (PKLT…KQKN), and 197–218 (VTVN…GLMN). Residue asparagine 218 is glycosylated (N-linked (GlcNAc...) asparagine). A helical transmembrane segment spans residues 243 to 263 (FFTVFLLALTILAVVVLITVF). Over 264 to 676 (LSVCILSRRQ…RAMTEEFSLM (413 aa)) the chain is Cytoplasmic. Positions 319–330 (TVQRDSTATSGA) are enriched in polar residues. A disordered region spans residues 319 to 347 (TVQRDSTATSGAISVGGLSPDEDKRGDQR). The Protein kinase domain maps to 366–640 (RASAEVLGSG…HEAVDRIEEV (275 aa)). Position 368 is a phosphoserine (serine 368). Residues 372 to 380 (LGSGGFGSS) and lysine 394 contribute to the ATP site. Phosphoserine occurs at positions 446 and 543. The interval 641–676 (DRDAGGGQESVRSSYVTASDGDHRSSRAMTEEFSLM) is disordered.

The protein belongs to the protein kinase superfamily. Ser/Thr protein kinase family.

It localises to the membrane. The enzyme catalyses L-seryl-[protein] + ATP = O-phospho-L-seryl-[protein] + ADP + H(+). It catalyses the reaction L-threonyl-[protein] + ATP = O-phospho-L-threonyl-[protein] + ADP + H(+). This Arabidopsis thaliana (Mouse-ear cress) protein is Probable LRR receptor-like serine/threonine-protein kinase At4g31250.